Here is a 182-residue protein sequence, read N- to C-terminus: ATP synthase subunit b, chloroplastic (182 aa).

The helical transmembrane segment at 31–53 (IINISVVLGVLVYFGKGVLSNLL) threads the bilayer.

The protein belongs to the ATPase B chain family. As to quaternary structure, F-type ATPases have 2 components, F(1) - the catalytic core - and F(0) - the membrane proton channel. F(1) has five subunits: alpha(3), beta(3), gamma(1), delta(1), epsilon(1). F(0) has four main subunits: a(1), b(1), b'(1) and c(10-14). The alpha and beta chains form an alternating ring which encloses part of the gamma chain. F(1) is attached to F(0) by a central stalk formed by the gamma and epsilon chains, while a peripheral stalk is formed by the delta, b and b' chains.

It is found in the plastid. The protein localises to the chloroplast thylakoid membrane. F(1)F(0) ATP synthase produces ATP from ADP in the presence of a proton or sodium gradient. F-type ATPases consist of two structural domains, F(1) containing the extramembraneous catalytic core and F(0) containing the membrane proton channel, linked together by a central stalk and a peripheral stalk. During catalysis, ATP synthesis in the catalytic domain of F(1) is coupled via a rotary mechanism of the central stalk subunits to proton translocation. Its function is as follows. Component of the F(0) channel, it forms part of the peripheral stalk, linking F(1) to F(0). The protein is ATP synthase subunit b, chloroplastic of Welwitschia mirabilis (Tree tumbo).